Consider the following 719-residue polypeptide: DNA replication licensing factor MCM7 (719 aa).

A2 carries the N-acetylalanine modification. Glycyl lysine isopeptide (Lys-Gly) (interchain with G-Cter in SUMO2) cross-links involve residues K15 and K28. S314 carries the phosphoserine modification. Residues 332–538 (FYEKLAASIA…NDLRLAQHIT (207 aa)) enclose the MCM domain. Y345 contributes to the ATP binding site. Position 365 is a phosphoserine (S365). ATP-binding residues include G384, A386, K387, S388, and N489. Phosphoserine is present on S500. The short motif at 513–516 (SRFD) is the Arginine finger element. R514 provides a ligand contact to ATP. The segment at 521–564 (IQDRPDRDNDLRLAQHITYVHQHSRQPPAQFEPLDMKLMRRYIA) is interaction with RAD17. The segment at 577–719 (LADYITAAYV…NTSRTRITFV (143 aa)) is interaction with ATRIP. R604 provides a ligand contact to ATP. Position 678 is a phosphoserine (S678).

Belongs to the MCM family. In terms of assembly, component of the MCM2-7 complex. The complex forms a toroidal hexameric ring with the proposed subunit order MCM2-MCM6-MCM4-MCM7-MCM3-MCM5. Component of the CMG helicase complex, a hexameric ring of related MCM2-7 subunits stabilized by CDC45 and the tetrameric GINS complex. Interacts with the ATR-ATRIP complex and with RAD17. Interacts with TIPIN. Interacts with MCMBP. Interacts with ANKRD17. Component of the replisome complex composed of at least DONSON, MCM2, MCM7, PCNA and TICRR. O-glycosylated (O-GlcNAcylated), in a cell cycle-dependent manner. Post-translationally, ubiquitinated by ECS(LRR1) E3 ubiquitin-protein ligase complex when forks converge following formation of DNA interstrand cross-links. During mitosis, ubiquitinated by TRAIP when forks converge following formation of DNA interstrand cross-links. Short ubiquitin chains on MCM7 promote recruitment of DNA glycosylase NEIL3. If the interstrand cross-link cannot be cleaved by NEIL3, the ubiquitin chains continue to grow on MCM7, promoting the unloading of the CMG helicase complex by the VCP/p97 ATPase.

It localises to the nucleus. The protein localises to the chromosome. It carries out the reaction ATP + H2O = ADP + phosphate + H(+). Its function is as follows. Acts as a component of the MCM2-7 complex (MCM complex) which is the replicative helicase essential for 'once per cell cycle' DNA replication initiation and elongation in eukaryotic cells. Core component of CDC45-MCM-GINS (CMG) helicase, the molecular machine that unwinds template DNA during replication, and around which the replisome is built. The active ATPase sites in the MCM2-7 ring are formed through the interaction surfaces of two neighboring subunits such that a critical structure of a conserved arginine finger motif is provided in trans relative to the ATP-binding site of the Walker A box of the adjacent subunit. The six ATPase active sites, however, are likely to contribute differentially to the complex helicase activity. Uncomplexed form does not show ATPase or DNA helicase. Required for S-phase checkpoint activation upon UV-induced damage. The sequence is that of DNA replication licensing factor MCM7 (Mcm7) from Mus musculus (Mouse).